The following is a 382-amino-acid chain: Phenylalanine dehydrogenase (382 aa).

Arg54 contacts NAD(+). Lys78 is an L-phenylalanine binding site. The active-site Proton donor/acceptor is Lys90. Residues Asp125, Ser156, Thr160, Gly190–Tyr196, Asp213–Ile214, Ala253–Phe254, and Ser274–Asn276 contribute to the NAD(+) site. Asn276 provides a ligand contact to L-phenylalanine.

Belongs to the Glu/Leu/Phe/Val dehydrogenases family.

The catalysed reaction is L-phenylalanine + NAD(+) + H2O = 3-phenylpyruvate + NH4(+) + NADH + H(+). With respect to regulation, activity is not affected by the metal chelating agent EDTA. Addition of 1 mM Mg(2+) results in 15% increase in activity, while the enzyme is strongly inhibited by 1 mM Fe(3+), Fe(2+), Cu(2+), Zn(2+) and Ag(+). Functionally, catalyzes the reversible NAD(+)-dependent oxidative deamination of L-phenylalanine to phenylpyruvate. Can also catalyze the oxidative deamination of several other amino acids, with much lower efficiency. Shows activity towards various bulky aromatic alpha-keto acids/esters and (S)-amine alcohols. Can catalyze the amination of 3-(2-chlorophenyl)-2-oxopropionic acid (CPOA) to produce 2-chloro-L-phenylalanine (2-Cl-Phe), a chemical compound used in the pharmaceutical and biotechnology industries. Shows a preference for amination over deamination. This is Phenylalanine dehydrogenase from Bacillus thermotolerans (Quasibacillus thermotolerans).